Reading from the N-terminus, the 445-residue chain is 3-phosphoshikimate 1-carboxyvinyltransferase (445 aa).

Residues Lys-21, Ser-22, and Arg-26 each coordinate 3-phosphoshikimate. Lys-21 provides a ligand contact to phosphoenolpyruvate. 2 residues coordinate phosphoenolpyruvate: Gly-92 and Arg-120. 3-phosphoshikimate is bound by residues Ser-165, Gln-166, Asp-307, and Lys-334. Gln-166 is a phosphoenolpyruvate binding site. The Proton acceptor role is filled by Asp-307. Positions 338, 379, and 405 each coordinate phosphoenolpyruvate.

The protein belongs to the EPSP synthase family. As to quaternary structure, monomer.

It localises to the cytoplasm. The enzyme catalyses 3-phosphoshikimate + phosphoenolpyruvate = 5-O-(1-carboxyvinyl)-3-phosphoshikimate + phosphate. It functions in the pathway metabolic intermediate biosynthesis; chorismate biosynthesis; chorismate from D-erythrose 4-phosphate and phosphoenolpyruvate: step 6/7. In terms of biological role, catalyzes the transfer of the enolpyruvyl moiety of phosphoenolpyruvate (PEP) to the 5-hydroxyl of shikimate-3-phosphate (S3P) to produce enolpyruvyl shikimate-3-phosphate and inorganic phosphate. This is 3-phosphoshikimate 1-carboxyvinyltransferase from Chlamydia abortus (strain DSM 27085 / S26/3) (Chlamydophila abortus).